Consider the following 489-residue polypeptide: N-succinylglutamate 5-semialdehyde dehydrogenase (489 aa).

223–228 (GSSNTG) contributes to the NAD(+) binding site. Catalysis depends on residues E246 and C280.

It belongs to the aldehyde dehydrogenase family. AstD subfamily.

It catalyses the reaction N-succinyl-L-glutamate 5-semialdehyde + NAD(+) + H2O = N-succinyl-L-glutamate + NADH + 2 H(+). It functions in the pathway amino-acid degradation; L-arginine degradation via AST pathway; L-glutamate and succinate from L-arginine: step 4/5. In terms of biological role, catalyzes the NAD-dependent reduction of succinylglutamate semialdehyde into succinylglutamate. This chain is N-succinylglutamate 5-semialdehyde dehydrogenase, found in Idiomarina loihiensis (strain ATCC BAA-735 / DSM 15497 / L2-TR).